The following is a 150-amino-acid chain: MSEVASVTDAQIEKFSLLYKERRKVQMMRFFGVTALTLISARLAFKGVASRKYIPTMFQLNHKPPPFSYKGEVVNALAYGTALSTGGFAMLGFGLCWIWDVSTLKELGNKLKELMGDGSEKDKLVSTNMDLDEDTQKVADALEAMLSTKK.

2 helical membrane-spanning segments follow: residues 28–45 (MRFF…RLAF) and 77–99 (LAYG…CWIW).

The protein belongs to the AIM11 family.

Its subcellular location is the membrane. The sequence is that of Altered inheritance of mitochondria protein 11 (AIM11) from Kluyveromyces lactis (strain ATCC 8585 / CBS 2359 / DSM 70799 / NBRC 1267 / NRRL Y-1140 / WM37) (Yeast).